Consider the following 203-residue polypeptide: VEL1-related protein SPBPB2B2.15 (203 aa).

Residues 1-16 form the signal peptide; the sequence is MFKNLIFLFFIGLATA.

The protein belongs to the VEL1 family.

The protein resides in the cytoplasm. It localises to the cytosol. This chain is VEL1-related protein SPBPB2B2.15, found in Schizosaccharomyces pombe (strain 972 / ATCC 24843) (Fission yeast).